Reading from the N-terminus, the 72-residue chain is Large ribosomal subunit protein uL29 (72 aa).

It belongs to the universal ribosomal protein uL29 family. Part of the 50S ribosomal subunit.

This is Large ribosomal subunit protein uL29 from Pyrococcus furiosus (strain ATCC 43587 / DSM 3638 / JCM 8422 / Vc1).